We begin with the raw amino-acid sequence, 655 residues long: NAD(P)H-quinone oxidoreductase subunit 5, chloroplastic (655 aa).

Helical transmembrane passes span 7-27 (YAWL…LGLI), 40-60 (FAFF…SILI), 89-109 (IDPL…LVMI), 124-144 (FFAY…SPNL), 147-167 (IYVF…FWFT), 185-205 (GDFG…SFEF), 226-246 (HPVQ…GPMA), 265-285 (TPIS…FLVA), 296-316 (IVMG…AIIA), 334-354 (LGYM…FHLI), 361-381 (ALLF…VGFN), 402-422 (AITF…ACFW), 434-454 (AQPI…FYMF), 488-508 (ILIP…VGTP), 533-553 (LSMS…ASLI), and 635-655 (QSYV…SQGF).

The protein belongs to the complex I subunit 5 family. As to quaternary structure, NDH is composed of at least 16 different subunits, 5 of which are encoded in the nucleus.

The protein localises to the plastid. The protein resides in the chloroplast thylakoid membrane. It catalyses the reaction a plastoquinone + NADH + (n+1) H(+)(in) = a plastoquinol + NAD(+) + n H(+)(out). The enzyme catalyses a plastoquinone + NADPH + (n+1) H(+)(in) = a plastoquinol + NADP(+) + n H(+)(out). In terms of biological role, NDH shuttles electrons from NAD(P)H:plastoquinone, via FMN and iron-sulfur (Fe-S) centers, to quinones in the photosynthetic chain and possibly in a chloroplast respiratory chain. The immediate electron acceptor for the enzyme in this species is believed to be plastoquinone. Couples the redox reaction to proton translocation, and thus conserves the redox energy in a proton gradient. This Chlorokybus atmophyticus (Soil alga) protein is NAD(P)H-quinone oxidoreductase subunit 5, chloroplastic (ndhF).